We begin with the raw amino-acid sequence, 1518 residues long: Putative cellulose synthase 3 (1518 aa).

Residues 1 to 731 are catalytic; it reads MYGTWFTTGK…EEKLEKQSFV (731 aa). 3 helical membrane passes run 24–44, 71–91, and 105–125; these read PVWV…SVRI, ITVF…VWRL, and LAVL…LSYF. The catalytic subdomain A stretch occupies residues 144–237; that stretch reads QWPSVDVFVP…FAVIFDCDHV (94 aa). Active-site residues include aspartate 186 and aspartate 330. A catalytic subdomain B region spans residues 314–374; that stretch reads EAVMGIGGFA…GQRVRWARGM (61 aa). 5 helical membrane-spanning segments follow: residues 404–424, 428–448, 465–485, 514–534, and 543–563; these read FLFA…LFLG, IAAS…HSVI, IYET…LLQP, ILAG…VWQF, and FILN…SIAV. The PilZ domain occupies 569–668; it reads QTRNAPRVSV…ERQVVSMVFG (100 aa). Residues 732–1518 are cyclic di-GMP binding domain; that stretch reads LKPVPRSARH…IARDDLTGEL (787 aa). Positions 765–785 are disordered; that stretch reads APSPDQSGVTAETPFGDSNTG. Polar residues predominate over residues 768 to 785; the sequence is PDQSGVTAETPFGDSNTG. A helical membrane pass occupies residues 1481-1501; it reads ALYLAGLAGAGLAALGVWAWL.

It in the N-terminal section; belongs to the glycosyltransferase 2 family. This sequence in the C-terminal section; belongs to the AcsB/BcsB family.

It is found in the cell inner membrane. It catalyses the reaction [(1-&gt;4)-beta-D-glucosyl](n) + UDP-alpha-D-glucose = [(1-&gt;4)-beta-D-glucosyl](n+1) + UDP + H(+). It functions in the pathway glycan metabolism; bacterial cellulose biosynthesis. In Komagataeibacter xylinus (Gluconacetobacter xylinus), this protein is Putative cellulose synthase 3 (bcsABII-B).